The sequence spans 575 residues: MSKLRNLNRQFISNLKTHETVTNAKRNLILSILKSTTTKREARNYLNKYQNQFDFSDITFNNGVPSNSLEKRDSQRELFINRFLNKQNPFTNIYDDETKLQKIPLRLALFKIKFQSISLENWKGMAETFKRLIHLGISPIIMLDYDHLPANTFRNNELYMLNQTNKIMNILGKPTEENDLKTIIMRSLFTKKTINDKDLAIDNLESVLIPLYQGVIPIIQPIVYNASTCMQEFIDSNDLLFSLCSSLLTTKNVLSIEKVVMIDPIGGIPSIERNQTSHVFINLSQEYSDIVSELYIGFIKPEYRIFHMNNLKAMNKTLTLVSDKTGNDETTGIITTPDIMSVNNDQLNPIIYNVLTDRSIISSSLPTSHNRTPELSTSILKKGVDVNILDALNYPKAFTLNNLVQDGSVNKSKLVDLIDDSFGKKLDTEKYFDRINDSLATVVIVGDYDGAAIITWETCSKTNEKIAYLDKFAIASVNQGLPGLADIIFKIILQSHPNELIWRSRKNNPVNKWYFERCCGTLSNPGSQWKIFYTGDIFNKKIDKLKKQGIPGGVNIHGKMHQYSDITENIPPSFL.

The N-terminal 35 residues, 1-35 (MSKLRNLNRQFISNLKTHETVTNAKRNLILSILKS), are a transit peptide targeting the mitochondrion. The N-acetyltransferase domain maps to 398–557 (FTLNNLVQDG…QGIPGGVNIH (160 aa)).

Belongs to the acetyltransferase family.

It localises to the mitochondrion. It catalyses the reaction L-glutamate + acetyl-CoA = N-acetyl-L-glutamate + CoA + H(+). The protein operates within amino-acid biosynthesis; L-arginine biosynthesis; N(2)-acetyl-L-ornithine from L-glutamate: step 1/4. N-acetylglutamate synthase involved in arginine biosynthesis. The sequence is that of Amino-acid acetyltransferase, mitochondrial (ARG2) from Debaryomyces hansenii (strain ATCC 36239 / CBS 767 / BCRC 21394 / JCM 1990 / NBRC 0083 / IGC 2968) (Yeast).